A 188-amino-acid chain; its full sequence is MSNALPSAPLDAADYIKSHIRTVPDWPEPGVQFRDITPLLQEPKSLRVLIDLFVQRYIDAKLDYIAGLDARGFIIGPILAYELNLGFIPIRKAGKLPYNRLAQSYELEYGCATVEIHEDACKPGDRVVIIDDLIATGGTMMAGKILLERLGAVVVEGAAIIDLPELGGSKLLRDSGLALYTVTGFEGH.

The protein belongs to the purine/pyrimidine phosphoribosyltransferase family. Homodimer.

It is found in the cytoplasm. It catalyses the reaction AMP + diphosphate = 5-phospho-alpha-D-ribose 1-diphosphate + adenine. The protein operates within purine metabolism; AMP biosynthesis via salvage pathway; AMP from adenine: step 1/1. Its function is as follows. Catalyzes a salvage reaction resulting in the formation of AMP, that is energically less costly than de novo synthesis. The polypeptide is Adenine phosphoribosyltransferase (Paraburkholderia xenovorans (strain LB400)).